The primary structure comprises 754 residues: Glutathione biosynthesis bifunctional protein GshAB (754 aa).

The interval 1–332 (MTLNQLLQKL…QGHALNEKIA (332 aa)) is glutamate--cysteine ligase. In terms of domain architecture, ATP-grasp spans 488–746 (KKILADASFP…ITTKILDKLF (259 aa)). ATP is bound at residue 515–573 (PLIKDKQIVVKPKSTNFGLGISIFQEPASLDNYQKALEIAFAEDTSVLVEEFIPGTEYR). Residues Asp695, Glu716, and Asn718 each contribute to the Mg(2+) site. Asp695, Glu716, and Asn718 together coordinate Mn(2+).

The protein in the N-terminal section; belongs to the glutamate--cysteine ligase type 1 family. Type 2 subfamily. As to quaternary structure, monomer. Mg(2+) is required as a cofactor. Requires Mn(2+) as cofactor.

The catalysed reaction is L-cysteine + L-glutamate + ATP = gamma-L-glutamyl-L-cysteine + ADP + phosphate + H(+). It carries out the reaction gamma-L-glutamyl-L-cysteine + glycine + ATP = glutathione + ADP + phosphate + H(+). Its pathway is sulfur metabolism; glutathione biosynthesis; glutathione from L-cysteine and L-glutamate: step 1/2. It functions in the pathway sulfur metabolism; glutathione biosynthesis; glutathione from L-cysteine and L-glutamate: step 2/2. In terms of biological role, synthesizes glutathione from L-glutamate and L-cysteine via gamma-L-glutamyl-L-cysteine. In Streptococcus thermophilus (strain ATCC BAA-250 / LMG 18311), this protein is Glutathione biosynthesis bifunctional protein GshAB.